The primary structure comprises 660 residues: DNA polymerase alpha-associated DNA helicase A (660 aa).

232–239 lines the ATP pocket; it reads GPPGTGKT.

Belongs to the DNA2/NAM7 helicase family. As to quaternary structure, associates with the hexameric DNA polymerase alpha.

Its subcellular location is the cytoplasm. The protein resides in the nucleus. The catalysed reaction is ATP + H2O = ADP + phosphate + H(+). In terms of biological role, DNA polymerase alpha-associated DNA helicase which may be involved in DNA replication. The polypeptide is DNA polymerase alpha-associated DNA helicase A (hcs1) (Schizosaccharomyces pombe (strain 972 / ATCC 24843) (Fission yeast)).